A 134-amino-acid polypeptide reads, in one-letter code: Profilin-3 (134 aa).

A disulfide bridge links Cys-13 with Cys-118. Positions Ala-84 to Thr-100 match the Involved in PIP2 interaction motif. The residue at position 114 (Thr-114) is a Phosphothreonine.

The protein belongs to the profilin family. In terms of assembly, occurs in many kinds of cells as a complex with monomeric actin in a 1:1 ratio. Phosphorylated by MAP kinases.

It localises to the cytoplasm. The protein localises to the cytoskeleton. Functionally, binds to actin and affects the structure of the cytoskeleton. At high concentrations, profilin prevents the polymerization of actin, whereas it enhances it at low concentrations. In Olea europaea (Common olive), this protein is Profilin-3.